Consider the following 183-residue polypeptide: Dermatopontin (183 aa).

A Pyrrolidone carboxylic acid modification is found at glutamine 1. Tyrosine 5 bears the Sulfotyrosine mark. 4 repeat units span residues 8 to 61 (PYQQ…ACMP), 52 to 57 (DRQWNY), 62 to 117 (TPQS…CCRY), and 107 to 112 (DREWQF). A 2 X 53-55 AA tandem repeats region spans residues 8-117 (PYQQYHDYSD…REWQFYCCRY (110 aa)). 5 disulfide bridges follow: cysteine 32–cysteine 59, cysteine 72–cysteine 114, cysteine 88–cysteine 115, cysteine 121–cysteine 178, and cysteine 125–cysteine 171. The tract at residues 52 to 168 (DRQWNYACMP…AVERDRQWKF (117 aa)) is 3 X 6 AA tandem repeats of D-R-[EQ]-W-[NQK]-[FY]. Sulfotyrosine occurs at positions 144, 146, 148, and 149. Residues 163–168 (DRQWKF) form a 2-3 repeat. Tyrosine 176 is subject to Sulfotyrosine.

The protein belongs to the dermatopontin family. As to quaternary structure, interacts with TGFB1, DCN and collagen. Sulfated on tyrosine residue(s). As to expression, detected in skin, skeletal muscle, heart, lung, articular cartilage, long bone and calvaria. Smaller amounts detected in kidney. Not detected in brain, liver or spleen.

It is found in the secreted. The protein resides in the extracellular space. It localises to the extracellular matrix. Its function is as follows. Seems to mediate adhesion by cell surface integrin binding. May serve as a communication link between the dermal fibroblast cell surface and its extracellular matrix environment. Enhances TGFB1 activity. Inhibits cell proliferation. Accelerates collagen fibril formation, and stabilizes collagen fibrils against low-temperature dissociation. This chain is Dermatopontin (DPT), found in Sus scrofa (Pig).